We begin with the raw amino-acid sequence, 1245 residues long: Structural polyprotein (1245 aa).

Residues 1-106 (MNRGFFNMLG…KTKPGKRQRM (106 aa)) are disordered. A host transcription inhibition region spans residues 37 to 70 (GLASQIQQLTTAVSALVIGQATRPQNPRPRPPPR). Over residues 38-49 (LASQIQQLTTAV) the composition is skewed to polar residues. The Nuclear localization signal signature appears at 63-100 (PRPRPPPRQKKQAPKQPPKPKKPKPQEKKKKQPAKTKP). The segment covering 67-106 (PPPRQKKQAPKQPPKPKKPKPQEKKKKQPAKTKPGKRQRM) has biased composition (basic residues). Positions 86–115 (KPQEKKKKQPAKTKPGKRQRMALKLEADRL) are binding to the viral RNA. The tract at residues 100-114 (PGKRQRMALKLEADR) is ribosome-binding. Positions 114–264 (RLFDVKNEDG…KTTPEGTEEW (151 aa)) constitute a Peptidase S3 domain. The Charge relay system role is filled by His141. Positions 146–156 (IDHPVLSKLKF) match the Nuclear export signal motif. Residues 157–162 (TKSSAY) are interaction with spike glycoprotein E2. Asp163 serves as the catalytic Charge relay system. The tract at residues 185-195 (PEGFYNWHHGA) is dimerization of the capsid protein. Ser215 functions as the Charge relay system in the catalytic mechanism. A dimerization of the capsid protein region spans residues 221–225 (DNSGR). An interaction with spike glycoprotein E2 region spans residues 249 to 253 (SKGKT). The functions as an uncleaved signal peptide for the precursor of protein E3/E2 stretch occupies residues 265–279 (SAAPLVTAMCLLGNV). An N-linked (GlcNAc...) asparagine; by host glycan is attached at Asn278. 4 disulfides stabilise this stretch: Cys283-Cys289, Cys480-Cys594, Cys529-Cys554, and Cys531-Cys548. The Extracellular portion of the chain corresponds to 329 to 690 (SVTDDFTLTS…HEIVQHYYHR (362 aa)). N-linked (GlcNAc...) asparagine; by host glycosylation occurs at Asn524. Asn646 carries N-linked (GlcNAc...) asparagine; by host glycosylation. Residues 691 to 718 (HPVYTILAVASAAVAMMIGVTVAALCAC) traverse the membrane as a helical segment. Residues 719–723 (KARRE) are interaction with the capsid protein. The Cytoplasmic portion of the chain corresponds to 719 to 751 (KARRECLTPYALAPNAVIPTSLALLCCVRSANA). Residues Cys724, Cys744, and Cys745 are each lipidated (S-palmitoyl cysteine; by host). Cys724 and Cys745 are oxidised to a cystine. At 752-763 (ETFTETMSYFWS) the chain is on the extracellular side. A helical membrane pass occupies residues 764 to 784 (NSQPFFWVQLCIPLAAVIVLM). A topological domain (cytoplasmic) is located at residue Arg785. A helical transmembrane segment spans residues 786–806 (CCSCCLPFLVVAGAYLAKVDA). Topologically, residues 807–1214 (YEHATTVPNV…QAAISKTSWS (408 aa)) are extracellular. Disulfide bonds link Cys855/Cys920, Cys868/Cys900, Cys869/Cys902, and Cys874/Cys884. Residues 890–907 (VYPFMWGGAQCFCDSENS) are E1 fusion peptide loop. Asn945 and Asn1051 each carry an N-linked (GlcNAc...) asparagine; by host glycan. Disulfide bonds link Cys1065-Cys1077, Cys1107-Cys1182, Cys1112-Cys1186, and Cys1134-Cys1176. A helical membrane pass occupies residues 1215 to 1239 (WLFALFGGASSLLIIGLTIFACSMM). Topologically, residues 1240-1245 (LTSTRR) are cytoplasmic.

Homodimer. Homomultimer. Interacts with host karyopherin KPNA4; this interaction allows the nuclear import of the viral capsid protein. Interacts with spike glycoprotein E2. Interacts with host IRAK1; the interaction leads to inhibition of IRAK1-dependent signaling. As to quaternary structure, the precursor of protein E3/E2 and E1 form a heterodimer shortly after synthesis. In terms of assembly, the precursor of protein E3/E2 and E1 form a heterodimer shortly after synthesis. Processing of the precursor of protein E3/E2 into E2 and E3 results in a heterodimer of the spike glycoproteins E2 and E1. Spike at virion surface are constituted of a trimer of E2-E1 heterodimers. After target cell attachment and endocytosis, E1 change conformation to form homotrimers. E2-E1 heterodimers interact with host VLDLR or LRP8/APOER2 to mediate viral entry. Interacts with 6K protein. Processing of the precursor of protein E3/E2 into E2 and E3 results in a heterodimer of the spike glycoproteins E2 and E1. Spike at virion surface are constituted of a trimer of E2-E1 heterodimers. E2-E1 heterodimers interact with host VLDLR or LRP8/APOER2 to mediate viral entry. Interacts with 6K protein. Interacts with the capsid protein. As to quaternary structure, oligomer. Interacts with spike glycoprotein E1. Interacts with spike glycoprotein E2. Post-translationally, structural polyprotein: Specific enzymatic cleavages in vivo yield mature proteins. Capsid protein is auto-cleaved during polyprotein translation, unmasking a signal peptide at the N-terminus of the precursor of E3/E2. The remaining polyprotein is then targeted to the host endoplasmic reticulum, where host signal peptidase cleaves it into pE2, 6K and E1 proteins. pE2 is further processed to mature E3 and E2 by host furin in trans-Golgi vesicle. In terms of processing, palmitoylated via thioester bonds. These palmitoylations may induce disruption of the C-terminus transmembrane. This would result in the reorientation of E2 C-terminus from lumenal to cytoplasmic side. N-glycosylated. Post-translationally, palmitoylated via thioester bonds.

Its subcellular location is the virion. The protein localises to the host cytoplasm. It is found in the host cell membrane. The protein resides in the host nucleus. It localises to the virion membrane. Its subcellular location is the host Golgi apparatus. The protein localises to the host trans-Golgi network. It is found in the host endoplasmic reticulum. It catalyses the reaction Autocatalytic release of the core protein from the N-terminus of the togavirus structural polyprotein by hydrolysis of a -Trp-|-Ser- bond.. Its function is as follows. Forms an icosahedral capsid with a T=4 symmetry composed of 240 copies of the capsid protein surrounded by a lipid membrane through which penetrate 80 spikes composed of trimers of E1-E2 heterodimers. The capsid protein binds to the viral RNA genome at a site adjacent to a ribosome binding site for viral genome translation following genome release. Possesses a protease activity that results in its autocatalytic cleavage from the nascent structural protein. Following its self-cleavage, the capsid protein transiently associates with ribosomes, and within several minutes the protein binds to viral RNA and rapidly assembles into icosahedric core particles. The resulting nucleocapsid eventually associates with the cytoplasmic domain of the spike glycoprotein E2 at the cell membrane, leading to budding and formation of mature virions. In case of infection, new virions attach to target cells and after clathrin-mediated endocytosis their membrane fuses with the host endosomal membrane. This leads to the release of the nucleocapsid into the cytoplasm, followed by an uncoating event necessary for the genomic RNA to become accessible. The uncoating might be triggered by the interaction of capsid proteins with ribosomes. Binding of ribosomes would release the genomic RNA since the same region is genomic RNA-binding and ribosome-binding. Specifically inhibits interleukin-1 receptor-associated kinase 1/IRAK1-dependent signaling during viral entry, representing a means by which the alphaviruses may evade innate immune detection and activation prior to viral gene expression. Provides the signal sequence for the translocation of the precursor of protein E3/E2 to the host endoplasmic reticulum. Furin-cleaved E3 remains associated with spike glycoprotein E1 and mediates pH protection of the latter during the transport via the secretory pathway. After virion release from the host cell, the assembly protein E3 is gradually released in the extracellular space. Functionally, plays a role in viral attachment to target host cell, by binding to the cell receptors VLDLR or LRP8/APOER2. Synthesized as a pE2 precursor which is processed by furin at the cell membrane just before virion budding, giving rise to E2-E1 heterodimer. The pE2-E1 heterodimer is stable, whereas E2-E1 is unstable and dissociate at low pH. pE2 is processed at the last step, presumably to avoid E1 fusion activation before its final export to cell surface. E2 C-terminus contains a transitory transmembrane that would be disrupted by palmitoylation, resulting in reorientation of the C-terminal tail from lumenal to cytoplasmic side. This step is critical since E2 C-terminus is involved in budding by interacting with capsid proteins. This release of E2 C-terminus in cytoplasm occurs lately in protein export, and precludes premature assembly of particles at the endoplasmic reticulum membrane. In terms of biological role, acts as a viroporin that participates in virus glycoprotein processing and transport to the plasma membrane, cell permeabilization and budding of viral particles. Disrupts the calcium homeostasis of the cell, probably at the endoplasmic reticulum level resulting in the increased levels of cytoplasmic calcium. Because of its lipophilic properties, the 6K protein is postulated to influence the selection of lipids that interact with the transmembrane domains of the glycoproteins, which, in turn, affects the deformability of the bilayer required for the extreme curvature that occurs as budding proceeds. Present in low amount in virions, about 3% compared to viral glycoproteins. Its function is as follows. Class II viral fusion protein. Fusion activity is inactive as long as E1 is bound to E2 in mature virion. After virus attachment to target cell via host VLDLR or LRP8/APOER2 and endocytosis, acidification of the endosome induces dissociation of E1/E2 heterodimer and concomitant trimerization of the E1 subunits. This E1 trimer is fusion active, and promotes release of viral nucleocapsid in cytoplasm after endosome and viral membrane fusion. Efficient fusion requires the presence of cholesterol and sphingolipid in the target membrane. This Acrocephalus scirpaceus (Eurasian reed-warbler) protein is Structural polyprotein.